Reading from the N-terminus, the 278-residue chain is tRNA pseudouridine synthase A (278 aa).

Catalysis depends on Asp-52, which acts as the Nucleophile. Residue Tyr-111 participates in substrate binding. The span at 253-264 (AKAGPLEAAPLG) shows a compositional bias: low complexity. The interval 253-278 (AKAGPLEAAPLGEAPLKEATLKEDWR) is disordered. The segment covering 267 to 278 (PLKEATLKEDWR) has biased composition (basic and acidic residues).

It belongs to the tRNA pseudouridine synthase TruA family. In terms of assembly, homodimer.

The enzyme catalyses uridine(38/39/40) in tRNA = pseudouridine(38/39/40) in tRNA. Its function is as follows. Formation of pseudouridine at positions 38, 39 and 40 in the anticodon stem and loop of transfer RNAs. The sequence is that of tRNA pseudouridine synthase A from Rhodospirillum rubrum (strain ATCC 11170 / ATH 1.1.1 / DSM 467 / LMG 4362 / NCIMB 8255 / S1).